The sequence spans 232 residues: Lipopolysaccharide core heptose(II) kinase WaaY (232 aa).

This sequence belongs to the protein kinase superfamily. RfaY/WaaY family.

The catalysed reaction is alpha-D-Glc-(1-&gt;3)-[L-alpha-D-Hep-(1-&gt;7)]-L-alpha-D-Hep-(1-&gt;3)-4-O-PO3(2-)-L-alpha-D-Hep-(1-&gt;5)-[alpha-Kdo-(2-&gt;4)]-alpha-Kdo-(2-&gt;6)-lipid A + ATP = alpha-D-Glc-(1-&gt;3)-[L-alpha-D-Hep-(1-&gt;7)]-4-O-PO3(2-)-L-alpha-D-Hep-(1-&gt;3)-4-O-PO3(2-)-L-alpha-D-Hep-(1-&gt;5)-[alpha-Kdo-(2-&gt;4)]-alpha-Kdo-(2-&gt;6)-lipid A + ADP + H(+). It participates in bacterial outer membrane biogenesis; LPS core biosynthesis. Functionally, kinase involved in the biosynthesis of the core oligosaccharide region of lipopolysaccharide (LPS). Catalyzes the phosphorylation of the second heptose unit (HepII) of the inner core. The sequence is that of Lipopolysaccharide core heptose(II) kinase WaaY from Salmonella typhimurium (strain LT2 / SGSC1412 / ATCC 700720).